A 482-amino-acid chain; its full sequence is tRNA sulfurtransferase (482 aa).

Positions 61-165 constitute a THUMP domain; the sequence is LAIRDALTRI…DDRLLLIKGR (105 aa). ATP-binding positions include 183-184, Lys-265, Gly-287, and Gln-296; that span reads LI. Residues Cys-344 and Cys-456 are joined by a disulfide bond. The region spanning 404–482 is the Rhodanese domain; sequence FGANDVILDI…GFANVKVYRP (79 aa). Cys-456 (cysteine persulfide intermediate) is an active-site residue.

The protein belongs to the ThiI family.

The protein resides in the cytoplasm. It carries out the reaction [ThiI sulfur-carrier protein]-S-sulfanyl-L-cysteine + a uridine in tRNA + 2 reduced [2Fe-2S]-[ferredoxin] + ATP + H(+) = [ThiI sulfur-carrier protein]-L-cysteine + a 4-thiouridine in tRNA + 2 oxidized [2Fe-2S]-[ferredoxin] + AMP + diphosphate. The enzyme catalyses [ThiS sulfur-carrier protein]-C-terminal Gly-Gly-AMP + S-sulfanyl-L-cysteinyl-[cysteine desulfurase] + AH2 = [ThiS sulfur-carrier protein]-C-terminal-Gly-aminoethanethioate + L-cysteinyl-[cysteine desulfurase] + A + AMP + 2 H(+). It functions in the pathway cofactor biosynthesis; thiamine diphosphate biosynthesis. In terms of biological role, catalyzes the ATP-dependent transfer of a sulfur to tRNA to produce 4-thiouridine in position 8 of tRNAs, which functions as a near-UV photosensor. Also catalyzes the transfer of sulfur to the sulfur carrier protein ThiS, forming ThiS-thiocarboxylate. This is a step in the synthesis of thiazole, in the thiamine biosynthesis pathway. The sulfur is donated as persulfide by IscS. In Salmonella arizonae (strain ATCC BAA-731 / CDC346-86 / RSK2980), this protein is tRNA sulfurtransferase.